A 160-amino-acid chain; its full sequence is MVPKLFTSPICLLLLLGLMGVEGSLHAKPGQFTWAQWFEIQHINMTSGQCTNAMLVINNYQRRCKNQNTFLLTTFADVVHVCGNPSMPCPSNTSLNNCHHSGVQVPLIHCNLTTPSRRISNCRYTQTTANKYYIVACNNSDPVRDPPQYPVVPVHLDRVI.

The N-terminal stretch at Met-1–Ala-27 is a signal peptide. C-linked (Man) tryptophan glycosylation is present at Trp-34. Residue His-42 is the Proton acceptor of the active site. Asn-44 is a glycosylation site (N-linked (GlcNAc...) asparagine). Disulfide bonds link Cys-50–Cys-110, Cys-64–Cys-122, Cys-82–Cys-137, and Cys-89–Cys-98. 3'-nitrotyrosine is present on Tyr-60. Lys-65–Thr-69 lines the substrate pocket. 3 N-linked (GlcNAc...) asparagine glycosylation sites follow: Asn-92, Asn-111, and Asn-138. His-155 acts as the Proton donor in catalysis.

The protein belongs to the pancreatic ribonuclease family. As to quaternary structure, interacts with and forms a tight 1:1 complex with RNH1. Dimerization of two such complexes may occur.

It localises to the lysosome. Its subcellular location is the cytoplasmic granule. The catalysed reaction is an [RNA] containing cytidine + H2O = an [RNA]-3'-cytidine-3'-phosphate + a 5'-hydroxy-ribonucleotide-3'-[RNA].. It carries out the reaction an [RNA] containing uridine + H2O = an [RNA]-3'-uridine-3'-phosphate + a 5'-hydroxy-ribonucleotide-3'-[RNA].. Its function is as follows. This is a non-secretory ribonuclease. It is a pyrimidine specific nuclease with a slight preference for U. Cytotoxin and helminthotoxin. Possesses a wide variety of biological activities. In Papio hamadryas (Hamadryas baboon), this protein is Non-secretory ribonuclease (RNASE2).